We begin with the raw amino-acid sequence, 115 residues long: SOSS complex subunit C homolog (115 aa).

It belongs to the SOSS-C family.

This chain is SOSS complex subunit C homolog, found in Drosophila mojavensis (Fruit fly).